A 523-amino-acid polypeptide reads, in one-letter code: Putative L-type lectin-domain containing receptor kinase V.6 (523 aa).

A signal peptide spans 1–27 (MFSEVKVLQIVLVQWLTLFSFTYNSHG). The tract at residues 28–242 (TYILDGSAVF…TGSIRALHYM (215 aa)) is legume-lectin like. At 28 to 279 (TYILDGSAVF…KPSDRLRTVL (252 aa)) the chain is on the extracellular side. N-linked (GlcNAc...) asparagine glycosylation is found at asparagine 47, asparagine 59, asparagine 112, and asparagine 171. The chain crosses the membrane as a helical span at residues 280 to 300 (AVCLTLALFAVFLASGIGFVF). Over 301 to 523 (YLRHKKVKEV…TGRAVRVKFF (223 aa)) the chain is Cytoplasmic. Residues 335-523 (FKEKQLLGKG…TGRAVRVKFF (189 aa)) form the Protein kinase domain. ATP contacts are provided by residues 341–349 (LGKGGFGQV) and lysine 364. The active-site Proton acceptor is aspartate 464.

It in the C-terminal section; belongs to the protein kinase superfamily. Ser/Thr protein kinase family. This sequence in the N-terminal section; belongs to the leguminous lectin family.

The protein resides in the cell membrane. It catalyses the reaction L-seryl-[protein] + ATP = O-phospho-L-seryl-[protein] + ADP + H(+). The catalysed reaction is L-threonyl-[protein] + ATP = O-phospho-L-threonyl-[protein] + ADP + H(+). The chain is Putative L-type lectin-domain containing receptor kinase V.6 (LECRK56) from Arabidopsis thaliana (Mouse-ear cress).